The following is a 103-amino-acid chain: Nucleoid-associated protein A2cp1_3777 (103 aa).

This sequence belongs to the YbaB/EbfC family. In terms of assembly, homodimer.

It localises to the cytoplasm. The protein resides in the nucleoid. Functionally, binds to DNA and alters its conformation. May be involved in regulation of gene expression, nucleoid organization and DNA protection. This Anaeromyxobacter dehalogenans (strain 2CP-1 / ATCC BAA-258) protein is Nucleoid-associated protein A2cp1_3777.